We begin with the raw amino-acid sequence, 621 residues long: Rab11 family-interacting protein 4A (621 aa).

EF-hand domains are found at residues 14–49 and 47–82; these read AFLK…FGQG and GQGD…IKGC. D27, D29, D31, Y33, H38, D60, N62, R66, and D71 together coordinate Ca(2+). 2 disordered regions span residues 132–172 and 203–243; these read YSDE…KEEG and DYGE…GQTP. Positions 151-161 are enriched in low complexity; the sequence is AADSGAGSESS. Over residues 162–172 the composition is skewed to basic and acidic residues; the sequence is EGGRQDDKEEG. A compositionally biased stretch (polar residues) spans 225 to 243; the sequence is TNGFSDLGSSLPSSAGQTP. The stretch at 348–556 forms a coiled coil; the sequence is DLKSKLKQEN…LNGQILSLSL (209 aa). Positions 558-620 constitute an FIP-RBD domain; it reads EAKNLFACHT…DHNPSILEIK (63 aa).

As to quaternary structure, homodimer. Forms a complex with Rab11 (rab11a or rab11b) and arf6. Isoform 1 is predominantly expressed in neural tissues. Isoform B is expressed ubiquitously. In the developing retina, it is expressed in progenitors throughout the retina at early stages and becomes restricted to the ganglion cell layer and ciliary marginal zone as differentiation proceeds.

Its subcellular location is the recycling endosome membrane. It localises to the cleavage furrow. It is found in the midbody. The protein resides in the cytoplasmic vesicle. Acts as a regulator of endocytic traffic by participating in membrane delivery. Required for the abscission step in cytokinesis, possibly by acting as an 'address tag' delivering recycling endosome membranes to the cleavage furrow during late cytokinesis. May play a role in differentiation during retinal development. This is Rab11 family-interacting protein 4A (rab11fip4a) from Danio rerio (Zebrafish).